Consider the following 347-residue polypeptide: tRNA N6-adenosine threonylcarbamoyltransferase (347 aa).

Residues histidine 111 and histidine 115 each coordinate Fe cation. Residues 134-138, aspartate 167, glycine 180, and asparagine 277 contribute to the substrate site; that span reads LVSGG. Aspartate 305 contacts Fe cation.

The protein belongs to the KAE1 / TsaD family. It depends on Fe(2+) as a cofactor.

It localises to the cytoplasm. It catalyses the reaction L-threonylcarbamoyladenylate + adenosine(37) in tRNA = N(6)-L-threonylcarbamoyladenosine(37) in tRNA + AMP + H(+). In terms of biological role, required for the formation of a threonylcarbamoyl group on adenosine at position 37 (t(6)A37) in tRNAs that read codons beginning with adenine. Is involved in the transfer of the threonylcarbamoyl moiety of threonylcarbamoyl-AMP (TC-AMP) to the N6 group of A37, together with TsaE and TsaB. TsaD likely plays a direct catalytic role in this reaction. This chain is tRNA N6-adenosine threonylcarbamoyltransferase, found in Ralstonia pickettii (strain 12J).